A 152-amino-acid chain; its full sequence is Aspartate carbamoyltransferase regulatory chain (152 aa).

4 residues coordinate Zn(2+): Cys108, Cys113, Cys137, and Cys140.

It belongs to the PyrI family. In terms of assembly, contains catalytic and regulatory chains. Zn(2+) is required as a cofactor.

Involved in allosteric regulation of aspartate carbamoyltransferase. The sequence is that of Aspartate carbamoyltransferase regulatory chain from Neisseria gonorrhoeae (strain ATCC 700825 / FA 1090).